Reading from the N-terminus, the 53-residue chain is ETSYTLNEVVPLKEFVPEWVRIGFSATTGAEFAAHEVLSWFFHSELAGTSSSN.

This sequence belongs to the leguminous lectin family. In terms of assembly, tetramer of two alpha and two beta chains.

This is Mannose/glucose-specific lectin alpha 1 chain from Lathyrus ochrus (Cyprus-vetch).